The primary structure comprises 213 residues: Large ribosomal subunit protein uL3 (213 aa).

Belongs to the universal ribosomal protein uL3 family. In terms of assembly, part of the 50S ribosomal subunit. Forms a cluster with proteins L14 and L19.

In terms of biological role, one of the primary rRNA binding proteins, it binds directly near the 3'-end of the 23S rRNA, where it nucleates assembly of the 50S subunit. The protein is Large ribosomal subunit protein uL3 of Bifidobacterium adolescentis (strain ATCC 15703 / DSM 20083 / NCTC 11814 / E194a).